A 142-amino-acid polypeptide reads, in one-letter code: SsrA-binding protein (142 aa).

It belongs to the SmpB family.

It localises to the cytoplasm. In terms of biological role, required for rescue of stalled ribosomes mediated by trans-translation. Binds to transfer-messenger RNA (tmRNA), required for stable association of tmRNA with ribosomes. tmRNA and SmpB together mimic tRNA shape, replacing the anticodon stem-loop with SmpB. tmRNA is encoded by the ssrA gene; the 2 termini fold to resemble tRNA(Ala) and it encodes a 'tag peptide', a short internal open reading frame. During trans-translation Ala-aminoacylated tmRNA acts like a tRNA, entering the A-site of stalled ribosomes, displacing the stalled mRNA. The ribosome then switches to translate the ORF on the tmRNA; the nascent peptide is terminated with the 'tag peptide' encoded by the tmRNA and targeted for degradation. The ribosome is freed to recommence translation, which seems to be the essential function of trans-translation. The chain is SsrA-binding protein from Mycoplasma mobile (strain ATCC 43663 / 163K / NCTC 11711) (Mesomycoplasma mobile).